A 168-amino-acid chain; its full sequence is Secretory-abundant heat soluble protein 33020 (168 aa).

A signal peptide spans 1 to 19; the sequence is MARFLVALALFGVVAMTAA. The segment at 26-57 is SAHS-c1; sequence EWSGKPWLGKFVAEVSDKSENWEAFVDALGLP. The tract at residues 72–100 is SAHS-c2; sequence YKQGEHYHHILSLPDKNINKDIEFTLGQE. Residues 113 to 162 form an SAHS-c3 region; the sequence is KYFEDGNKLVADVSIPAKGKSIHDVYDVQGDQLIKSYKVGDVVAKKWFKK.

It belongs to the Secretory-abundant heat soluble protein (SAHS) family.

The protein localises to the secreted. Secreted heat soluble protein acting as a molecular shield in water-deficient condition. Tardigrade-specific intrinsically disordered proteins (TDPs) are essential for desiccation tolerance by forming non-crystalline amorphous solids upon desiccation, and this vitrified state mirrors their protective capabilities. This is Secretory-abundant heat soluble protein 33020 from Hypsibius exemplaris (Freshwater tardigrade).